Here is an 81-residue protein sequence, read N- to C-terminus: RNA-binding protein KhpA (81 aa).

One can recognise a KH domain in the interval 34–81; it reads KIALRLSVHKSDTGKVIGKQGRTAKAIRTAVFAAGVQSSKKVQFEIFD.

This sequence belongs to the KhpA RNA-binding protein family. As to quaternary structure, forms a complex with KhpB.

The protein localises to the cytoplasm. Functionally, a probable RNA chaperone. Forms a complex with KhpB which binds to cellular RNA and controls its expression. Plays a role in peptidoglycan (PG) homeostasis and cell length regulation. This is RNA-binding protein KhpA from Bacillus subtilis (strain 168).